The chain runs to 444 residues: Homogentisate 1,2-dioxygenase (444 aa).

The Proton acceptor role is filled by His-298. 2 residues coordinate Fe cation: His-341 and Glu-347. Tyr-356 and His-377 together coordinate homogentisate. His-377 serves as a coordination point for Fe cation.

This sequence belongs to the homogentisate dioxygenase family. As to quaternary structure, hexamer; dimer of trimers. Fe cation is required as a cofactor.

It carries out the reaction homogentisate + O2 = 4-maleylacetoacetate + H(+). Its pathway is amino-acid degradation; L-phenylalanine degradation; acetoacetate and fumarate from L-phenylalanine: step 4/6. In terms of biological role, involved in the catabolism of homogentisate (2,5-dihydroxyphenylacetate or 2,5-OH-PhAc), a central intermediate in the degradation of phenylalanine and tyrosine. Catalyzes the oxidative ring cleavage of the aromatic ring of homogentisate to yield maleylacetoacetate. In Burkholderia ambifaria (strain MC40-6), this protein is Homogentisate 1,2-dioxygenase.